Reading from the N-terminus, the 764-residue chain is Dehydrocurvularin biosynthesis regulator (764 aa).

Positions 28-59 (CWECKRRKMKCIFDPRITSTSCNGCRQRGSPC) form a DNA-binding region, zn(2)-C6 fungal-type. Disordered stretches follow at residues 73 to 94 (HGAN…SDDA), 112 to 136 (YRYL…ASTC), and 633 to 672 (FPTS…PALS). A compositionally biased stretch (polar residues) spans 77 to 88 (DSASLDASTPIA). The span at 663–672 (HPNTPSPALS) shows a compositional bias: polar residues.

It is found in the nucleus. In terms of biological role, transcription factor involved in regulation of the dehydrocurvularin biosynthesis gene cluster. The chain is Dehydrocurvularin biosynthesis regulator from Alternaria cinerariae.